Reading from the N-terminus, the 2705-residue chain is Teneurin-1 (2705 aa).

Disordered regions lie at residues 1–73 (MEQM…STQD) and 135–222 (CLSS…TQDS). The Teneurin N-terminal domain maps to 1-299 (MEQMDCKPYQ…KPYRCCNWKC (299 aa)). The Cytoplasmic segment spans residues 1 to 305 (MEQMDCKPYQ…NWKCTALSAT (305 aa)). Residues 32-46 (DGRKQRQSYDSRETL) show a composition bias toward basic and acidic residues. The Nuclear localization signal (NLS) motif lies at 62-65 (RKRK). Residues 135-147 (CLSSRANSALSLT) are compositionally biased toward polar residues. Residues 148–157 (DTDHERKSDG) are compositionally biased toward basic and acidic residues. Over residues 173 to 182 (PLPPPPPPPH) the composition is skewed to pro residues. Positions 271–278 (PPPRPLPR) match the Required for interaction with SORBS1 (Ten-1 ICD form) motif. A helical membrane pass occupies residues 306–326 (AITVTLALLLAYVIAVHLFGL). Over 327–2705 (TWQLQPVEGQ…FMRQSEIGRR (2379 aa)) the chain is Extracellular. Asn414 carries an N-linked (GlcNAc...) asparagine glycan. 8 consecutive EGF-like domains span residues 509–540 (VLDDCSTNCNGNGECISGHCHCFPGFLGPDCA), 541–572 (KDSCPVLCSGNGEYEKGHCVCRNGWKGPECDV), 573–605 (PEEQCIDPTCFGHGTCIMGVCICVPGYKGEICE), 606–638 (EEDCLDPMCSGHGVCVQGECHCSAGWGGVNCET), 639–672 (SLPICQEHCSGHGTFLLDVGLCSCEPQWTGSDCS), 673–702 (TELCTLDCGSHGVCSRGICQCEEGWVGPTC), 703–734 (EERTCHSHCAEHGQCKDGKCECSPGWEGDHCT), and 735–769 (IDGCPGLCYGNGRCTLDQNGWHCVCQVGWSGSGCN). 22 disulfide bridges follow: Cys513–Cys523, Cys517–Cys528, Cys530–Cys539, Cys548–Cys559, Cys561–Cys570, Cys577–Cys588, Cys582–Cys593, Cys595–Cys604, Cys609–Cys620, Cys614–Cys625, Cys627–Cys636, Cys647–Cys660, Cys662–Cys671, Cys676–Cys686, Cys680–Cys691, Cys693–Cys702, Cys707–Cys717, Cys711–Cys722, Cys724–Cys733, Cys738–Cys748, Cys742–Cys757, and Cys759–Cys768. N-linked (GlcNAc...) asparagine glycans are attached at residues Asn878 and Asn1057. 5 NHL repeats span residues 1167-1192 (LFAPVALTSGPDGSVYIGDFNFVRRI), 1202-1246 (LELR…AKSL), 1272-1316 (SHCG…NGMI), 1331-1382 (LSCD…IAGR), and 1461-1504 (CFSG…VSRN). One copy of the YD 1 repeat lies at 1514-1533 (YEIASPADQELYQFTINGTH). Residues Asn1530 and Asn1547 are each glycosylated (N-linked (GlcNAc...) asparagine). 4 YD repeats span residues 1550 to 1570 (YSGEGDVATITSSNGNSVHIR), 1588 to 1612 (YWLTISSNGVLKRVYAQGYNLALMT), 1613 to 1634 (YPGNTGLLATKSDENGWTTVYE), and 1635 to 1655 (YDSDGHLTNATFPTGEVSSFH). N-linked (GlcNAc...) asparagine glycosylation is found at Asn1643, Asn1679, Asn1737, Asn1761, and Asn1822. YD repeat units lie at residues 1825–1844 (YSHSGLVTYIQRGTWTEKME), 1845–1865 (YDPSGNIISRTWADGKIWSYT), 1866–1884 (YLEKSVMLLLHSQRRYIFE), 1885–1905 (YDQSDYLLSVTMPSMVRHALQ), 1913–1929 (YRNIYTPPDSGAAFIQD), 1930–1949 (VTRDGRLLQTLYPGTGRRVL), 1950–1969 (YKYSKQSRLSEILYDTTQVT), 1972–1992 (YEESSGVIKTIHLMHDGFICT), 1995–2015 (YRQTGPLIGRQIFRFSEEGLV), 2065–2085 (YDLNQVITTTVMKHTKIFSAN), and 2093–2113 (YEILKSIAYWMTIQYDNMGRM). Asn2125 carries an N-linked (GlcNAc...) asparagine glycan. YD repeat units follow at residues 2133–2153 (YDRDGQLQTVSVNDKTQWRYS), 2154–2174 (YDLNGNINLLSHGNSARLTPL), 2176–2196 (YDLRDRITRLGEIQYKMDEDG), 2208–2228 (YNSNGLLNKAYNKVSGWTVQY), and 2230–2250 (YDGLGRRVASKSSLGQHLQFF). Asn2265 is a glycosylation site (N-linked (GlcNAc...) asparagine). YD repeat units follow at residues 2276 to 2293 (YDLQGHLIAMELSSGEEY) and 2294 to 2317 (YVACDNTGTPLAVFSSRGQVIKEI). N-linked (GlcNAc...) asparagine glycosylation is present at Asn2582.

The protein belongs to the tenascin family. Teneurin subfamily. Homodimer; disulfide-linked. Heterodimer with other teneurins. Ten-1 ICD interacts with SORBS1 (via third SH3 domain). Interacts with MBD1 isoform 2. In terms of processing, derives from the plasma membrane form by proteolytic processing. Further proteolytic cleavage may be generated. Derives from the plasma membrane form by proteolytic cleavage and translocates to the nucleus. In terms of tissue distribution, expressed in the neurons of the developing visual system and in fetal brain.

Its subcellular location is the cell membrane. It is found in the nucleus. The protein resides in the nucleus speckle. It localises to the nucleus matrix. The protein localises to the cytoplasm. Its subcellular location is the cytoskeleton. Its function is as follows. Involved in neural development, regulating the establishment of proper connectivity within the nervous system. May function as a cellular signal transducer. Functionally, plays a role in the regulation of neuroplasticity in the limbic system. Mediates a rapid reorganization of actin- and tubulin-based cytoskeleton elements with an increase in dendritic arborization and spine density formation of neurons in the hippocampus and amygdala. Induces BDNF transcription inhibition in neurons. Activates the mitogen-activated protein (MAP) kinase 2 (MEK2) and extracellular signal-regulated kinase (ERK) cascade. Induces gene transcription activation. This Gallus gallus (Chicken) protein is Teneurin-1 (TENM1).